The chain runs to 710 residues: Pentatricopeptide repeat-containing protein At1g02060, chloroplastic (710 aa).

Residues M1–R21 constitute a chloroplast transit peptide. 12 PPR repeats span residues Q137–P171, S172–T202, D208–P242, D243–V277, N280–P314, N315–P351, D352–P386, D387–L421, L429–R459, D463–P497, D498–P532, and V533–Q567.

It belongs to the PPR family. P subfamily.

Its subcellular location is the plastid. The protein localises to the chloroplast. This Arabidopsis thaliana (Mouse-ear cress) protein is Pentatricopeptide repeat-containing protein At1g02060, chloroplastic.